The chain runs to 226 residues: Phospholipase Culp4 (226 aa).

Positions 1–45 (MIPRPQPHSGRWRAGAARRLTSLVAAAFAAATLLLTPALAPPASA) are cleaved as a signal peptide. The cysteines at positions 47 and 117 are disulfide-linked. The active-site Nucleophile is Ser-128. Cys-191 and Cys-198 are oxidised to a cystine. Residue Asp-195 is part of the active site. Catalysis depends on His-207, which acts as the Proton donor/acceptor.

The protein belongs to the cutinase family. Homodimer.

It localises to the cell membrane. The protein resides in the secreted. It is found in the cell wall. The catalysed reaction is 1,2-dihexadecanoyl-sn-glycero-3-phosphocholine + H2O = 1-hexadecanoyl-sn-glycero-3-phosphocholine + hexadecanoate + H(+). It carries out the reaction a butanoate ester + H2O = an aliphatic alcohol + butanoate + H(+). Inhibited by high concentrations of paraoxon. Inhibited by tetrahydrolipstatin (THL), a specific lipase inhibitor. Functionally, A2-type phospholipase, which is probably involved in the degradation of macrophage membrane. Hydrolyzes dipalmitoylphosphatidylcholine. Also shows moderate esterase activity and hydrolyzes the p-nitrophenol-linked aliphatic ester pNP-butyrate (C4). Does not exhibit cutinase activity. This chain is Phospholipase Culp4, found in Mycobacterium tuberculosis (strain ATCC 25618 / H37Rv).